The following is a 340-amino-acid chain: DNA-directed RNA polymerase subunit alpha (340 aa).

Residues 1 to 236 (MLSLSKNWNT…EQLQLFIAFE (236 aa)) form an alpha N-terminal domain (alpha-NTD) region. Residues 251-340 (FSPYLLKRVD…LSKRYEDSYN (90 aa)) form an alpha C-terminal domain (alpha-CTD) region.

The protein belongs to the RNA polymerase alpha chain family. As to quaternary structure, homodimer. The RNAP catalytic core consists of 2 alpha, 1 beta, 1 beta' and 1 omega subunit. When a sigma factor is associated with the core the holoenzyme is formed, which can initiate transcription.

The enzyme catalyses RNA(n) + a ribonucleoside 5'-triphosphate = RNA(n+1) + diphosphate. DNA-dependent RNA polymerase catalyzes the transcription of DNA into RNA using the four ribonucleoside triphosphates as substrates. The chain is DNA-directed RNA polymerase subunit alpha from Rickettsia typhi (strain ATCC VR-144 / Wilmington).